The sequence spans 657 residues: UvrABC system protein B (657 aa).

Residues 25–163 (ASIKNGNKYQ…QGMVLFLEIN (139 aa)) form the Helicase ATP-binding domain. 38–45 (GVTGSGKT) contributes to the ATP binding site. Positions 91–114 (YYDYYQPEAYIPRQDLFIEKDSSI) match the Beta-hairpin motif. The DEAD box motif lies at 130–133 (LSFD). Residues 433-599 (QVEILYDMAK…SVSRNVEESL (167 aa)) enclose the Helicase C-terminal domain. A UVR domain is found at 622-657 (AKIVKDLRKQMMEAADKLEFEKAAALRDEIKKMRKL).

This sequence belongs to the UvrB family. As to quaternary structure, forms a heterotetramer with UvrA during the search for lesions. Interacts with UvrC in an incision complex.

The protein localises to the cytoplasm. Its function is as follows. The UvrABC repair system catalyzes the recognition and processing of DNA lesions. A damage recognition complex composed of 2 UvrA and 2 UvrB subunits scans DNA for abnormalities. Upon binding of the UvrA(2)B(2) complex to a putative damaged site, the DNA wraps around one UvrB monomer. DNA wrap is dependent on ATP binding by UvrB and probably causes local melting of the DNA helix, facilitating insertion of UvrB beta-hairpin between the DNA strands. Then UvrB probes one DNA strand for the presence of a lesion. If a lesion is found the UvrA subunits dissociate and the UvrB-DNA preincision complex is formed. This complex is subsequently bound by UvrC and the second UvrB is released. If no lesion is found, the DNA wraps around the other UvrB subunit that will check the other stand for damage. The chain is UvrABC system protein B from Campylobacter hominis (strain ATCC BAA-381 / DSM 21671 / CCUG 45161 / LMG 19568 / NCTC 13146 / CH001A).